A 272-amino-acid chain; its full sequence is Interleukin-2 receptor subunit alpha (272 aa).

An N-terminal signal peptide occupies residues 1–21 (MDPYLLMWGLLTFITVPGCQA). Residues 22 to 84 (ELCDDDPPKI…SWDNQCQCTS (63 aa)) enclose the Sushi 1 domain. At 22–240 (ELCDDDPPKI…ETFIFTTEYQ (219 aa)) the chain is on the extracellular side. 3 disulfide bridges follow: C24–C67, C49–C80, and C51–C82. Residues N70 and N89 are each glycosylated (N-linked (GlcNAc...) asparagine). A compositionally biased stretch (polar residues) spans 87–98 (ARNTTKQVTPQP). The interval 87–109 (ARNTTKQVTPQPEEQKERKTTEM) is disordered. Residues 123–186 (GHCREPPPWE…WTQPQLICTG (64 aa)) enclose the Sushi 2 domain. 2 cysteine pairs are disulfide-bonded: C125–C168 and C152–C184. Residues 186-213 (GETEPSQFPGEEEPQASPDGLPESETSR) form a disordered region. Residues 241–259 (VAVAGCVFLLISVLLLSGL) form a helical membrane-spanning segment. At 260–272 (TWQRRQRKNRRTI) the chain is on the cytoplasmic side.

In terms of assembly, non-covalent dimer of an alpha and a beta subunit. IL2R exists in 3 different forms: a high affinity dimer, an intermediate affinity monomer (beta subunit), and a low affinity monomer (alpha subunit). The high and intermediate affinity forms also associate with a gamma subunit.

Its subcellular location is the membrane. Receptor for interleukin-2. The receptor is involved in the regulation of immune tolerance by controlling regulatory T cells (TREGs) activity. TREGs suppress the activation and expansion of autoreactive T-cells. In Macaca mulatta (Rhesus macaque), this protein is Interleukin-2 receptor subunit alpha (IL2RA).